The following is a 201-amino-acid chain: FMN-dependent NADH:quinone oxidoreductase (201 aa).

Residues Ser10, 16–18 (SQS), 96–99 (MYNF), and 140–143 (SRGG) contribute to the FMN site.

This sequence belongs to the azoreductase type 1 family. As to quaternary structure, homodimer. The cofactor is FMN.

It carries out the reaction 2 a quinone + NADH + H(+) = 2 a 1,4-benzosemiquinone + NAD(+). The enzyme catalyses N,N-dimethyl-1,4-phenylenediamine + anthranilate + 2 NAD(+) = 2-(4-dimethylaminophenyl)diazenylbenzoate + 2 NADH + 2 H(+). Its function is as follows. Quinone reductase that provides resistance to thiol-specific stress caused by electrophilic quinones. In terms of biological role, also exhibits azoreductase activity. Catalyzes the reductive cleavage of the azo bond in aromatic azo compounds to the corresponding amines. The protein is FMN-dependent NADH:quinone oxidoreductase of Pectobacterium atrosepticum (strain SCRI 1043 / ATCC BAA-672) (Erwinia carotovora subsp. atroseptica).